A 154-amino-acid polypeptide reads, in one-letter code: Crossover junction endodeoxyribonuclease RuvC (154 aa).

Active-site residues include Asp-7, Glu-67, and Asp-139. Mg(2+) is bound by residues Asp-7, Glu-67, and Asp-139.

Belongs to the RuvC family. In terms of assembly, homodimer which binds Holliday junction (HJ) DNA. The HJ becomes 2-fold symmetrical on binding to RuvC with unstacked arms; it has a different conformation from HJ DNA in complex with RuvA. In the full resolvosome a probable DNA-RuvA(4)-RuvB(12)-RuvC(2) complex forms which resolves the HJ. It depends on Mg(2+) as a cofactor.

It localises to the cytoplasm. It catalyses the reaction Endonucleolytic cleavage at a junction such as a reciprocal single-stranded crossover between two homologous DNA duplexes (Holliday junction).. In terms of biological role, the RuvA-RuvB-RuvC complex processes Holliday junction (HJ) DNA during genetic recombination and DNA repair. Endonuclease that resolves HJ intermediates. Cleaves cruciform DNA by making single-stranded nicks across the HJ at symmetrical positions within the homologous arms, yielding a 5'-phosphate and a 3'-hydroxyl group; requires a central core of homology in the junction. The consensus cleavage sequence is 5'-(A/T)TT(C/G)-3'. Cleavage occurs on the 3'-side of the TT dinucleotide at the point of strand exchange. HJ branch migration catalyzed by RuvA-RuvB allows RuvC to scan DNA until it finds its consensus sequence, where it cleaves and resolves the cruciform DNA. In Synechococcus sp. (strain CC9902), this protein is Crossover junction endodeoxyribonuclease RuvC.